Here is a 238-residue protein sequence, read N- to C-terminus: uncharacterized protein (238 aa).

2 disordered regions span residues 1 to 51 (MPCT…ASCA) and 214 to 238 (ITVE…FPTA). Residues 16 to 31 (ATWRTARPAPRRCGSC) show a composition bias toward low complexity.

This is an uncharacterized protein from Streptomyces griseus.